The chain runs to 130 residues: MSMQDPIADMLTRIRNGQAANKVAISMPSSKLKVAIASVLAEEGYVESFKIVEGSKPELEITLKYFQNKPVVESIQRVSRPGLRIYKRKDELPKVMGGLGIAVVSTSKGVMTDRAARQAGLGGEIICYVA.

The protein belongs to the universal ribosomal protein uS8 family. Part of the 30S ribosomal subunit. Contacts proteins S5 and S12.

Its function is as follows. One of the primary rRNA binding proteins, it binds directly to 16S rRNA central domain where it helps coordinate assembly of the platform of the 30S subunit. The chain is Small ribosomal subunit protein uS8 from Actinobacillus pleuropneumoniae serotype 5b (strain L20).